Consider the following 107-residue polypeptide: MSITLSDSAAARVNTFLANRGKGFGLRLGVRTSGCSGMAYVLEFVDEPTAEDTVFEDKGVKVVVDGKSLQFLDGTQLDFVKEGLNEGFKFSNPNVKDECGCGESFHV.

Positions 35, 99, and 101 each coordinate Fe cation.

The protein belongs to the HesB/IscA family. Homodimer; may form tetramers and higher multimers. Fe cation is required as a cofactor.

In terms of biological role, is able to transfer iron-sulfur clusters to apo-ferredoxin. Multiple cycles of [2Fe2S] cluster formation and transfer are observed, suggesting that IscA acts catalytically. Recruits intracellular free iron so as to provide iron for the assembly of transient iron-sulfur cluster in IscU in the presence of IscS, L-cysteine and the thioredoxin reductase system TrxA/TrxB. In Salmonella agona (strain SL483), this protein is Iron-binding protein IscA.